The primary structure comprises 252 residues: NADP-dependent (R)-specific alcohol dehydrogenase (252 aa).

Residues 16–19, 39–40, 63–64, Asn-90, Tyr-156, Lys-160, and 191–195 each bind NADP(+); these read TLGI, RH, DA, and IKTPL. Residue Tyr-156 is the Proton donor/acceptor of the active site. Gln-252 serves as a coordination point for Mg(2+).

Belongs to the short-chain dehydrogenases/reductases (SDR) family. In terms of assembly, homotetramer. Mg(2+) serves as cofactor.

The enzyme catalyses a secondary alcohol + NADP(+) = a ketone + NADPH + H(+). It catalyses the reaction acetophenone + NADPH + H(+) = (R)-1-phenylethanol + NADP(+). The catalysed reaction is 2,5-hexanedione + 2 NADPH + 2 H(+) = (2R,5R)-hexanediol + 2 NADP(+). It carries out the reaction ethyl 3-oxobutanoate + NADPH + H(+) = ethyl (R)-3-hydroxybutanoate + NADP(+). The enzyme catalyses 2-octanone + NADPH + H(+) = (2R)-octan-2-ol + NADP(+). Functionally, NADP-dependent (R)-specific alcohol dehydrogenase (ADH) with a broad substrate specificity, able to catalyze in vitro the stereoselective reduction of several aliphatic and aromatic ketones as well as beta-keto esters to the corresponding enantiomerically pure alcohols. This Lentilactobacillus kefiri (Lactobacillus kefiri) protein is NADP-dependent (R)-specific alcohol dehydrogenase.